Consider the following 231-residue polypeptide: Lactate utilization protein C (231 aa).

This sequence belongs to the LutC/YkgG family.

Functionally, is involved in L-lactate degradation and allows cells to grow with lactate as the sole carbon source. In Macrococcus caseolyticus (strain JCSC5402) (Macrococcoides caseolyticum), this protein is Lactate utilization protein C.